The primary structure comprises 629 residues: MSEVETSVEKHVFEADVAKLLHLMVHSVYSDKNVFLRELISNAADACEKLRYEAIVAPELLGSDPASRITLTLDEENARLVIEDNGIGMGRDELVESLGTIARSGTRAFMERIEAAQNKDGAQLIGQFGVGFYSAFMVADNVDVVSRRAGTDKAWHWASDGKGSYTVSAVDLADAPARGTRITLHLMDEAKTFTSRWTVERIVKEQSGHVPVPISIVEKPGAEPAQVADGTALWTKQKSEISKDDYTDFYRGVAGQYDEPALTVHFRAEGRHEYTALAFVPGSKPFDLFDPDRKGRMKLYVKRVFITDEAELLPRYLRFVRGLVDTADLPLNVSREMIQESPLLANIRKGLTNRVLTSIEKLAESDSEAFAKIWENFGSVIKEGIYEDFERRGQLLALSRFRTTADDDKPRALSDYVKEMKEGQSAIYYLTGDNLAQLKASPQLEGFRARGIEVLLLTCPVDSFWVTTAPDFDGKPFKSITQGAADLAGIAKNDDAAAASPEAGAAVTDFVSFARETLGEAVSDVRTSDRLTESAVCLVAPEQGPDRQLQKMLQDAGRIEGAPKPVLEINPGHQLIAALATCPSEDKAFREDAVKLLLDQARVLDGDRPEDPRAFAERLSRVFGRALKE.

The segment at 1–335 is a; substrate-binding; it reads MSEVETSVEK…TADLPLNVSR (335 aa). The b stretch occupies residues 336 to 551; that stretch reads EMIQESPLLA…EQGPDRQLQK (216 aa). The segment at 552–629 is c; that stretch reads MLQDAGRIEG…SRVFGRALKE (78 aa).

This sequence belongs to the heat shock protein 90 family. As to quaternary structure, homodimer.

The protein resides in the cytoplasm. Functionally, molecular chaperone. Has ATPase activity. This is Chaperone protein HtpG from Rhizobium meliloti (strain 1021) (Ensifer meliloti).